Reading from the N-terminus, the 245-residue chain is DNA repair protein RecO (245 aa).

This sequence belongs to the RecO family.

Involved in DNA repair and RecF pathway recombination. The polypeptide is DNA repair protein RecO (Porphyromonas gingivalis (strain ATCC 33277 / DSM 20709 / CIP 103683 / JCM 12257 / NCTC 11834 / 2561)).